The sequence spans 77 residues: MFPGGISMTELIIILAVILLLFGAGRLPEAGRALGEGIRNFRKALSGETEVKEVKAEDVKTEERKEEKKEEKEKVEA.

A helical transmembrane segment spans residues phenylalanine 2–phenylalanine 22. A disordered region spans residues lysine 52 to alanine 77.

This sequence belongs to the TatA/E family. In terms of assembly, forms a complex with TatC.

It localises to the cell inner membrane. Functionally, part of the twin-arginine translocation (Tat) system that transports large folded proteins containing a characteristic twin-arginine motif in their signal peptide across membranes. TatA could form the protein-conducting channel of the Tat system. The protein is Sec-independent protein translocase protein TatA 2 of Aquifex aeolicus (strain VF5).